The chain runs to 247 residues: Protein NipSnap homolog 3A (247 aa).

An N6-acetyllysine mark is found at Lys-48 and Lys-166.

Belongs to the NipSnap family.

The protein resides in the cytoplasm. It is found in the cytosol. The polypeptide is Protein NipSnap homolog 3A (NIPSNAP3A) (Pongo abelii (Sumatran orangutan)).